The chain runs to 102 residues: Membrane-bound protein LytA (102 aa).

Positions 1 to 16 are cleaved as a signal peptide; it reads MKKFIALLFFILLLSG. C17 carries the N-palmitoyl cysteine lipid modification. A lipid anchor (S-diacylglycerol cysteine) is attached at C17.

The protein resides in the cell membrane. Possible role in the secretion of LytB and LytC. The protein is Membrane-bound protein LytA (lytA) of Bacillus subtilis (strain 168).